The chain runs to 156 residues: Small ribosomal subunit protein uS7 (156 aa).

It belongs to the universal ribosomal protein uS7 family. Part of the 30S ribosomal subunit. Contacts proteins S9 and S11.

Its function is as follows. One of the primary rRNA binding proteins, it binds directly to 16S rRNA where it nucleates assembly of the head domain of the 30S subunit. Is located at the subunit interface close to the decoding center, probably blocks exit of the E-site tRNA. The protein is Small ribosomal subunit protein uS7 of Aromatoleum aromaticum (strain DSM 19018 / LMG 30748 / EbN1) (Azoarcus sp. (strain EbN1)).